Consider the following 908-residue polypeptide: 26S proteasome non-ATPase regulatory subunit 2 (908 aa).

Methionine 1 is modified (N-acetylmethionine). Residues 1–51 (MEEGGRDKTPVQSQQPSATAPSGADEKSSGKERRDAGEKDKEQELSEEDKQ) are disordered. Threonine 9 is modified (phosphothreonine). Residues 10–20 (PVQSQQPSATA) show a composition bias toward polar residues. A compositionally biased stretch (basic and acidic residues) spans 24–51 (ADEKSSGKERRDAGEKDKEQELSEEDKQ). Phosphoserine is present on residues serine 29 and serine 147. Phosphotyrosine is present on tyrosine 194. Phosphoserine is present on residues serine 361 and serine 363. PC repeat units lie at residues 409-442 (SAAA…YIKS), 443-479 (GALL…TMRL), 480-514 (GSIF…SMEV), 517-551 (VTAL…TELK), and 560-589 (LGLG…PFRS). At lysine 551 the chain carries N6-acetyllysine. A compositionally biased stretch (basic and acidic residues) spans 623–643 (KEKEEDKDKKEKKDKDKKEAP). Residues 623-645 (KEKEEDKDKKEKKDKDKKEAPAD) form a disordered region. PC repeat units follow at residues 692–723 (LALA…EVSY) and 742–757 (AAML…KDPN). The tract at residues 708–903 (DTLSKFSHDA…LEGFVILRKN (196 aa)) is required for interaction with UBLCP1.

Belongs to the proteasome subunit S2 family. In terms of assembly, component of the 19S proteasome regulatory particle complex. The 26S proteasome consists of a 20S core particle (CP) and two 19S regulatory subunits (RP). The regulatory particle is made of a lid composed of 9 subunits, a base containing 6 ATPases and few additional components including PSMD2. Interacts with RPGRIP1L. Interacts with CRY1 in a KDM8-dependent manner. Interacts (via C-terminus) with phosphatase UBLCP1 (via ubiquitin-like domain); the interaction recruits UBLCP1 to the 19S regulatory particle where it dephosphorylates 19S subunit PSMC2/RPT1 which impairs PSMC2 ATPase activity and disrupts 26S proteasome assembly.

Functionally, component of the 26S proteasome, a multiprotein complex involved in the ATP-dependent degradation of ubiquitinated proteins. This complex plays a key role in the maintenance of protein homeostasis by removing misfolded or damaged proteins, which could impair cellular functions, and by removing proteins whose functions are no longer required. Therefore, the proteasome participates in numerous cellular processes, including cell cycle progression, apoptosis, or DNA damage repair. In terms of biological role, binds to the intracellular domain of tumor necrosis factor type 1 receptor. The binding domain of TRAP1 and TRAP2 resides outside the death domain of TNFR1. The chain is 26S proteasome non-ATPase regulatory subunit 2 (Psmd2) from Rattus norvegicus (Rat).